A 430-amino-acid polypeptide reads, in one-letter code: Histidine--tRNA ligase (430 aa).

This sequence belongs to the class-II aminoacyl-tRNA synthetase family. In terms of assembly, homodimer.

It localises to the cytoplasm. The enzyme catalyses tRNA(His) + L-histidine + ATP = L-histidyl-tRNA(His) + AMP + diphosphate + H(+). The sequence is that of Histidine--tRNA ligase from Chlorobium limicola (strain DSM 245 / NBRC 103803 / 6330).